Here is a 980-residue protein sequence, read N- to C-terminus: BEM1-interacting protein 1 (980 aa).

Residues 13 to 77 (KSFPLYIAVN…PAVFTKRIAI (65 aa)) form the SH3 domain. A phosphoserine mark is found at Ser-104, Ser-106, and Ser-128. Residues 139-163 (SGSVEQEVSKSPTRVPEVSTPQLQD) form a disordered region. The span at 141–150 (SVEQEVSKSP) shows a compositional bias: polar residues. 2 positions are modified to phosphothreonine: Thr-151 and Thr-158. At Ser-209 the chain carries Phosphoserine. Residues 228-292 (WSPEEVTDYF…FKEIRNIKSA (65 aa)) enclose the SAM domain. Disordered regions lie at residues 333-356 (SKCNKLSSESSDRKSSSVTTELQR) and 390-438 (IFES…KNKN). Ser-393 and Ser-412 each carry phosphoserine. The segment covering 397–412 (APKPPSYPSPVQPPQS) has biased composition (pro residues). Residues 415 to 438 (FNNRYTNNNARFPPQTTYPPKNKN) are compositionally biased toward polar residues. Phosphoserine occurs at positions 525 and 528. Positions 544-762 (SSFDEEETKQ…AKKQQTSAFT (219 aa)) are disordered. Over residues 573–582 (HSRDASLSEM) the composition is skewed to basic and acidic residues. Phosphoserine is present on residues Ser-589, Ser-590, and Ser-593. Composition is skewed to low complexity over residues 589–608 (SSILSFFSSKSQSNPTSPTK) and 621–638 (HSRSQSNSYSHARSQSYS). Ser-644 and Ser-655 each carry phosphoserine. 2 stretches are compositionally biased toward polar residues: residues 645-662 (LVTSPLKTSLSPINSKSN) and 669-683 (ETPTSSNNKEAVSQP). A compositionally biased stretch (basic residues) spans 687 to 703 (KHKHKHKHKSKHKHKNS). Ser-735 bears the Phosphoserine mark. Positions 737–746 (SELTQKSTKS) are enriched in polar residues. Residues 776–895 (TADCSGWMSK…WLSAIIKATI (120 aa)) form the PH domain. Thr-919 carries the post-translational modification Phosphothreonine. The interval 930 to 980 (LRDAEEEEGRDQFGWDDTQNKRNSNYPIEQDQFETSDYLESSAFEYPGGRL) is disordered. Polar residues predominate over residues 950–968 (KRNSNYPIEQDQFETSDYL).

As to quaternary structure, interacts with BEM1.

It localises to the bud. It is found in the bud neck. In terms of biological role, functions redundantly with BOI2 to promote the fusion of secretory vesicles with the plasma membrane at sites of polarized growth. In Saccharomyces cerevisiae (strain ATCC 204508 / S288c) (Baker's yeast), this protein is BEM1-interacting protein 1.